We begin with the raw amino-acid sequence, 108 residues long: DNA-binding protein HBbu (108 aa).

This sequence belongs to the bacterial histone-like protein family.

Functionally, histone-like DNA-binding protein which is capable of wrapping DNA to stabilize it, and thus to prevent its denaturation under extreme environmental conditions. This Borrelia garinii subsp. bavariensis (strain ATCC BAA-2496 / DSM 23469 / PBi) (Borreliella bavariensis) protein is DNA-binding protein HBbu (hbb).